A 133-amino-acid chain; its full sequence is Small ribosomal subunit protein uS11 (133 aa).

The protein belongs to the universal ribosomal protein uS11 family. In terms of assembly, part of the 30S ribosomal subunit. Interacts with proteins S7 and S18. Binds to IF-3.

Its function is as follows. Located on the platform of the 30S subunit, it bridges several disparate RNA helices of the 16S rRNA. Forms part of the Shine-Dalgarno cleft in the 70S ribosome. This Cupriavidus metallidurans (strain ATCC 43123 / DSM 2839 / NBRC 102507 / CH34) (Ralstonia metallidurans) protein is Small ribosomal subunit protein uS11.